A 353-amino-acid chain; its full sequence is Cyclic GMP-AMP synthase-like receptor (353 aa).

ATP-binding positions include serine 60 and 72–74 (EYD). The Mg(2+) site is built by glutamate 72, aspartate 74, and aspartate 183. Aspartate 183 is a binding site for GTP. Lysine 245 lines the ATP pocket. Mn(2+) contacts are provided by leucine 269 and glutamate 270.

Belongs to the mab-21 family. It depends on Mg(2+) as a cofactor. Requires Mn(2+) as cofactor.

The catalysed reaction is GTP + ATP = 2',3'-cGAMP + 2 diphosphate. It carries out the reaction GTP + ATP = pppGp(2'-5')A + diphosphate. The enzyme catalyses pppGp(2'-5')A = 2',3'-cGAMP + diphosphate. Nucleotidyltransferase that catalyzes the formation of cyclic GMP-AMP (2',3'-cGAMP) from ATP and GTP and plays a key role in innate immunity. Acts as a key sensor of double-stranded RNA (dsRNA), the presence of dsRNA in the cytoplasm being a danger signal that triggers the immune responses. Directly binds dsRNA, activating the nucleotidyltransferase activity, leading to synthesis of 2',3'-cGAMP, a second messenger that binds to and activates Sting, thereby triggering the immune response via activation of the NF-kappa-B transcription factor. In Nicrophorus vespilloides (Boreal carrion beetle), this protein is Cyclic GMP-AMP synthase-like receptor.